The chain runs to 285 residues: (3S)-malyl-CoA thioesterase (285 aa).

The substrate site is built by arginine 70 and glutamate 122. Mg(2+) contacts are provided by glutamate 122 and aspartate 148.

This sequence belongs to the HpcH/HpaI aldolase family. Homodimer or homotrimer. It depends on Mg(2+) as a cofactor.

It carries out the reaction (S)-malyl-CoA + H2O = (S)-malate + CoA + H(+). Functionally, catalyzes the hydrolysis of (3S)-malyl-CoA to (3S)-malate and free CoA. Inactive towards beta-methylmalyl-CoA and other CoA esters. The polypeptide is (3S)-malyl-CoA thioesterase (Cereibacter sphaeroides (strain ATCC 17029 / ATH 2.4.9) (Rhodobacter sphaeroides)).